The primary structure comprises 238 residues: MKIHQIHDFDLNDESDFIRTQQSLIHKINLSPVIHPDSVNTCAGVDLAYWEQDGEPYGVCSIIVIDADTKEVIEKVHSMGKISVPYVSGFLAFRELPLIIEAAEKLEAEPDVFLFDGNGYLHYNHMGVATHAAFFLGKPTIGIAKTYLKIKGCDFEMPENEVGAYTDILIDGEVYGRALRTRRDVKPIFLSCGHNIDLESSYQITMKMINRDSRLPIPVRLADLETHVLRTFYRKNHV.

Positions 46 and 116 each coordinate Mg(2+).

It belongs to the endonuclease V family. Mg(2+) serves as cofactor.

It localises to the cytoplasm. It carries out the reaction Endonucleolytic cleavage at apurinic or apyrimidinic sites to products with a 5'-phosphate.. In terms of biological role, DNA repair enzyme involved in the repair of deaminated bases. Selectively cleaves double-stranded DNA at the second phosphodiester bond 3' to a deoxyinosine leaving behind the intact lesion on the nicked DNA. The protein is Endonuclease V of Bacillus velezensis (strain DSM 23117 / BGSC 10A6 / LMG 26770 / FZB42) (Bacillus amyloliquefaciens subsp. plantarum).